The sequence spans 575 residues: Putative export ATP-binding/permease protein RBE_0492 (575 aa).

Residues 20 to 303 enclose the ABC transmembrane type-1 domain; it reads LIIVIISLLS…IFELLSEMHL (284 aa). A run of 6 helical transmembrane segments spans residues 21-41, 61-81, 135-155, 158-178, 242-262, and 277-297; these read IIVIISLLSVSLALLLIGNVF, ILYICLLIIILSIASFFRSYF, FLSFFIRNSVMLVGSIILMFF, FKLASIVIITIPLLLIPIIKF, ALFFAFSMAFIFLGVTLVIWI, and IISFIYYAIIAGFSSGGIFEL. The ABC transporter domain occupies 336 to 571; sequence LEFKNVNFSY…SDLYRTIYKE (236 aa). Position 371–378 (371–378) interacts with ATP; sequence GRSGSGKS.

The protein belongs to the ABC transporter superfamily. Homodimer.

Its subcellular location is the cell inner membrane. Functionally, part of an ABC transporter complex. Transmembrane domains (TMD) form a pore in the inner membrane and the ATP-binding domain (NBD) is responsible for energy generation. The sequence is that of Putative export ATP-binding/permease protein RBE_0492 from Rickettsia bellii (strain RML369-C).